Here is a 78-residue protein sequence, read N- to C-terminus: Large ribosomal subunit protein bL28 (78 aa).

A disordered region spans residues 1–29 (MSAHCQVTGRKPSFGKSVSHSHRRTSRRW).

This sequence belongs to the bacterial ribosomal protein bL28 family.

This is Large ribosomal subunit protein bL28 from Corynebacterium glutamicum (strain ATCC 13032 / DSM 20300 / JCM 1318 / BCRC 11384 / CCUG 27702 / LMG 3730 / NBRC 12168 / NCIMB 10025 / NRRL B-2784 / 534).